A 787-amino-acid polypeptide reads, in one-letter code: Transcription factor SOX-6 (787 aa).

A disordered region spans residues 1–46 (MSSKQATSPFACAADGEDAMTQDLTSREKEEGSDQHVASHLPLHPI). Basic and acidic residues predominate over residues 25 to 34 (TSREKEEGSD). Residue threonine 119 is modified to Phosphothreonine. Residues 184-262 (LAEKERQLST…LLQQQIQVQG (79 aa)) adopt a coiled-coil conformation. The interval 340–429 (PGAKMPSTPQ…KSSIPSPIGG (90 aa)) is disordered. The span at 352-361 (NTAGTVSPTG) shows a compositional bias: polar residues. Serine 358 is modified (phosphoserine). Position 360 is a phosphothreonine (threonine 360). Glycyl lysine isopeptide (Lys-Gly) (interchain with G-Cter in SUMO) cross-links involve residues lysine 363 and lysine 376. Serine 398 and serine 401 each carry phosphoserine. Residues 398 to 420 (SPTSPTQNLFPASKTSPVNLPNK) are compositionally biased toward polar residues. Residues 580–648 (IKRPMNAFMV…IHLEKYPNYK (69 aa)) constitute a DNA-binding region (HMG box). Residues 712-740 (TPSPQMTSDCSSTSASPEPSLPVIQSTYG) show a composition bias toward polar residues. A disordered region spans residues 712-787 (TPSPQMTSDC…NEAPEAVSAN (76 aa)). Residues 755–768 (NGEDEMEMYDDYED) are compositionally biased toward acidic residues.

Homodimer. Interacts with DAZAP2. May interact with CENPK. Post-translationally, sumoylation inhibits the transcriptional activity.

The protein localises to the nucleus. The protein resides in the cytoplasm. Transcription factor that plays a key role in several developmental processes, including neurogenesis, chondrocytes differentiation and cartilage formation. Specifically binds the 5'-AACAAT-3' DNA motif present in enhancers and super-enhancers and promotes expression of genes important for chondrogenesis. Required for overt chondrogenesis when condensed prechondrocytes differentiate into early stage chondrocytes: SOX5 and SOX6 cooperatively bind with SOX9 on active enhancers and super-enhancers associated with cartilage-specific genes, and thereby potentiate SOX9's ability to transactivate. Not involved in precartilaginous condensation, the first step in chondrogenesis, during which skeletal progenitors differentiate into prechondrocytes. Together with SOX5, required to form and maintain a pool of highly proliferating chondroblasts between epiphyses and metaphyses, to form columnar chondroblasts, delay chondrocyte prehypertrophy but promote hypertrophy, and to delay terminal differentiation of chondrocytes on contact with ossification fronts. Binds to the proximal promoter region of the myelin protein MPZ gene, and is thereby involved in the differentiation of oligodendroglia in the developing spinal tube. Binds to the gene promoter of MBP and acts as a transcriptional repressor. The sequence is that of Transcription factor SOX-6 from Pongo abelii (Sumatran orangutan).